Consider the following 263-residue polypeptide: Phosphatidylglycerol--prolipoprotein diacylglyceryl transferase (263 aa).

4 helical membrane-spanning segments follow: residues 16-36 (LAVS…WFYA), 55-75 (FVTY…ILLY), 92-112 (EGGM…YIFC), and 117-137 (LNFL…LFFG). R138 contributes to the a 1,2-diacyl-sn-glycero-3-phospho-(1'-sn-glycerol) binding site. 3 helical membrane passes run 172–192 (QLYE…YAVF), 201–221 (GLNS…IEIF), and 234–254 (SLTM…YLII).

It belongs to the Lgt family.

It localises to the cell inner membrane. The enzyme catalyses L-cysteinyl-[prolipoprotein] + a 1,2-diacyl-sn-glycero-3-phospho-(1'-sn-glycerol) = an S-1,2-diacyl-sn-glyceryl-L-cysteinyl-[prolipoprotein] + sn-glycerol 1-phosphate + H(+). The protein operates within protein modification; lipoprotein biosynthesis (diacylglyceryl transfer). Its function is as follows. Catalyzes the transfer of the diacylglyceryl group from phosphatidylglycerol to the sulfhydryl group of the N-terminal cysteine of a prolipoprotein, the first step in the formation of mature lipoproteins. The sequence is that of Phosphatidylglycerol--prolipoprotein diacylglyceryl transferase from Rickettsia bellii (strain OSU 85-389).